Here is a 1452-residue protein sequence, read N- to C-terminus: Arf-GAP with Rho-GAP domain, ANK repeat and PH domain-containing protein 1 (1452 aa).

Residues 6–70 (DAALSVAEWL…LAGLHRAHAP (65 aa)) form the SAM domain. Residues 81 to 90 (PVPMKRHIFR) form a required for interaction with SH3KBP1 region. Disordered stretches follow at residues 87-258 (HIFR…LPSR) and 271-304 (EGEE…LNPP). Composition is skewed to pro residues over residues 92–104 (PPVP…PPPT), 154–167 (SVPP…PPYP), and 205–225 (PLQP…PPRL). Composition is skewed to acidic residues over residues 228–239 (EFDDSDYDDVPE) and 271–286 (EGEE…DDDH). Ser232 carries the phosphoserine modification. Position 234 is a phosphotyrosine; by PTK6 (Tyr234). One can recognise a PH 1 domain in the interval 329–421 (PVIKAGWLDK…WMQALQQAVV (93 aa)). Ser430 carries the post-translational modification Phosphoserine. The PH 2 domain occupies 442–531 (QPDRAGSLEL…WLEAMQGAIA (90 aa)). Tyr506 is subject to Phosphotyrosine. The region spanning 537–662 (SEVAERIWAA…RYHPLFGNQE (126 aa)) is the Arf-GAP domain. Residues 552 to 575 (CADCGAAQPDWASINLCVVICKRC) form a C4-type zinc finger. Ser740 is modified (phosphoserine). Residues 745-852 (TVSHSGFLYK…WVKCIAKAFV (108 aa)) form the PH 3 domain. The 186-residue stretch at 956 to 1141 (ASLGDTLSEQ…DLINHYVVVF (186 aa)) folds into the Rho-GAP domain. Residues 1174-1263 (GDFICTVYLE…SHLVVKKYQS (90 aa)) enclose the Ras-associating domain. The PH 4 domain occupies 1276-1398 (GDTKHGMMKF…WFATFLSVQH (123 aa)). A phosphoserine mark is found at Ser1430 and Ser1437.

In terms of assembly, interacts with SH3KBP1/CIN85 (via SH3 domains). The interaction is independent of EGF and does not affect ARAP1 GTPase-activating activity but is involved in regulating ubiquitination and endocytic trafficking of EGFR. ARAP1 competes with E3 ubiquitin-protein ligase CBL for binding to SH3KBP1, preventing interaction of CBL with SH3KBP1; this is likely to regulate SH3KBP1-mediated internalization of EGFR. Interacts with TNFRSF10A. In terms of processing, phosphorylated by PTK6 following EGF stimulation which enhances EGFR signaling by delaying EGFR down-regulation; the interaction is mediated by the SH2 domain of PTK6. Phosphorylation promotes association with the Golgi apparatus and endosomes. In terms of tissue distribution, expressed in the retina where it is detected in Mueller glia (at protein level). Also detected in the retinal pigment epithelium (at protein level). Expressed in osteoclasts (at protein level).

Its subcellular location is the cytoplasm. It is found in the golgi apparatus. It localises to the trans-Golgi network. The protein localises to the golgi stack membrane. The protein resides in the cell membrane. Its subcellular location is the endosome. It is found in the multivesicular body. It localises to the cell projection. The protein localises to the ruffle. The protein resides in the podosome. Its subcellular location is the early endosome. Phosphatidylinositol 3,4,5-trisphosphate-dependent GTPase-activating protein that modulates actin cytoskeleton remodeling by regulating ARF and RHO family members. Activated by phosphatidylinositol 3,4,5-trisphosphate (PtdIns(3,4,5)P3) binding and, to a lesser extent, by phosphatidylinositol 3,4-bisphosphate (PtdIns(3,4)P2) binding. Has a preference for ARF1 and ARF5. Positively regulates the ring size of circular dorsal ruffles and promotes macropinocytosis. Acts as a bridging factor in osteoclasts to control actin and membrane dynamics. Regulates the condensing of osteoclast podosomes into sealing zones which segregate the bone-facing membrane from other membrane domains and are required for osteoclast resorption activity. Also regulates recruitment of the AP-3 complex to endosomal membranes and trafficking of lysosomal membrane proteins to the ruffled membrane border of osteoclasts to modulate bone resorption. Regulates the endocytic trafficking of EGFR. Regulates the incorporation of CD63 and CD9 into multivesicular bodies. Required in the retinal pigment epithelium (RPE) for photoreceptor survival due to its role in promoting RPE phagocytosis. The protein is Arf-GAP with Rho-GAP domain, ANK repeat and PH domain-containing protein 1 of Mus musculus (Mouse).